Consider the following 363-residue polypeptide: Mitogen-activated protein kinase 13 (363 aa).

In terms of domain architecture, Protein kinase spans 33–319; that stretch reads IPPIEPIGRG…VDEALKQPYL (287 aa). Residues 39–47 and lysine 62 each bind ATP; that span reads IGRGAYGIV. Aspartate 159 serves as the catalytic Proton acceptor. Phosphothreonine is present on threonine 191. The TXY signature appears at 191 to 193; it reads TEY. Tyrosine 193 is subject to Phosphotyrosine. Threonine 196 carries the post-translational modification Phosphothreonine.

The protein belongs to the protein kinase superfamily. CMGC Ser/Thr protein kinase family. MAP kinase subfamily. As to quaternary structure, interacts with MKK6. Dually phosphorylated on Thr-191 and Tyr-193, which activates the enzyme. As to expression, expressed in roots, stems and flower buds.

It carries out the reaction L-seryl-[protein] + ATP = O-phospho-L-seryl-[protein] + ADP + H(+). The enzyme catalyses L-threonyl-[protein] + ATP = O-phospho-L-threonyl-[protein] + ADP + H(+). Activated by threonine and tyrosine phosphorylation. Activated by the MAP kinase kinase MKK6 in vitro. In terms of biological role, MKK6-MPK13 module positively regulates lateral root formation. The protein is Mitogen-activated protein kinase 13 (MPK13) of Arabidopsis thaliana (Mouse-ear cress).